The following is a 282-amino-acid chain: tRNA N(3)-cytidine methyltransferase METTL6 (282 aa).

7 residues coordinate S-adenosyl-L-methionine: Trp-45, Tyr-49, Gly-87, Asp-110, Asp-136, Leu-137, and Ile-157.

It belongs to the methyltransferase superfamily. METL family. As to quaternary structure, monomer. Interacts with SARS1/SerRS; interaction is mediated via tRNA(Ser) and is required for N(3)-methylcytidine methylation.

The protein resides in the cytoplasm. It is found in the nucleus. It carries out the reaction cytidine(32) in tRNA(Ser) + S-adenosyl-L-methionine = N(3)-methylcytidine(32) in tRNA(Ser) + S-adenosyl-L-homocysteine + H(+). S-adenosyl-L-methionine-dependent methyltransferase that mediates N(3)-methylcytidine modification of residue 32 of the tRNA anticodon loop of tRNA(Ser), including tRNA(Ser)(UGA) and tRNA(Ser)(GCU). Interaction with SARS1/SerRS is required for N(3)-methylcytidine methylation. In Mus musculus (Mouse), this protein is tRNA N(3)-cytidine methyltransferase METTL6.